A 269-amino-acid chain; its full sequence is 3-methyl-2-oxobutanoate hydroxymethyltransferase (269 aa).

Mg(2+) is bound by residues aspartate 52 and aspartate 91. Residues aspartate 52–threonine 53, aspartate 91, and lysine 121 each bind 3-methyl-2-oxobutanoate. Glutamate 123 lines the Mg(2+) pocket. Glutamate 186 (proton acceptor) is an active-site residue.

Belongs to the PanB family. In terms of assembly, homodecamer; pentamer of dimers. Mg(2+) serves as cofactor.

Its subcellular location is the cytoplasm. It catalyses the reaction 3-methyl-2-oxobutanoate + (6R)-5,10-methylene-5,6,7,8-tetrahydrofolate + H2O = 2-dehydropantoate + (6S)-5,6,7,8-tetrahydrofolate. It functions in the pathway cofactor biosynthesis; (R)-pantothenate biosynthesis; (R)-pantoate from 3-methyl-2-oxobutanoate: step 1/2. Its function is as follows. Catalyzes the reversible reaction in which hydroxymethyl group from 5,10-methylenetetrahydrofolate is transferred onto alpha-ketoisovalerate to form ketopantoate. The polypeptide is 3-methyl-2-oxobutanoate hydroxymethyltransferase (Rhodopirellula baltica (strain DSM 10527 / NCIMB 13988 / SH1)).